A 185-amino-acid polypeptide reads, in one-letter code: Large ribosomal subunit protein eL19 (185 aa).

The interval 152-185 (SDKLTSQQEARRAKNTASRAKRNEKAQIVAKVDV) is disordered.

This sequence belongs to the eukaryotic ribosomal protein eL19 family.

The sequence is that of Large ribosomal subunit protein eL19 (RPL19) from Tetrahymena thermophila (strain SB210).